We begin with the raw amino-acid sequence, 353 residues long: Paraneoplastic antigen Ma1 homolog (353 aa).

It belongs to the PNMA family.

It is found in the nucleus. The protein resides in the nucleolus. In Bos taurus (Bovine), this protein is Paraneoplastic antigen Ma1 homolog (PNMA1).